The sequence spans 754 residues: Probable galactinol--sucrose galactosyltransferase 1 (754 aa).

Belongs to the glycosyl hydrolases 36 family.

The enzyme catalyses alpha-D-galactosyl-(1-&gt;3)-1D-myo-inositol + sucrose = raffinose + myo-inositol. In terms of biological role, transglycosidase operating by a ping-pong reaction mechanism. Involved in the synthesis of raffinose, a major soluble carbohydrate in seeds, roots and tubers. The sequence is that of Probable galactinol--sucrose galactosyltransferase 1 (RFS1) from Arabidopsis thaliana (Mouse-ear cress).